Consider the following 197-residue polypeptide: 3-isopropylmalate dehydratase small subunit (197 aa).

It belongs to the LeuD family. LeuD type 1 subfamily. In terms of assembly, heterodimer of LeuC and LeuD.

It catalyses the reaction (2R,3S)-3-isopropylmalate = (2S)-2-isopropylmalate. Its pathway is amino-acid biosynthesis; L-leucine biosynthesis; L-leucine from 3-methyl-2-oxobutanoate: step 2/4. Its function is as follows. Catalyzes the isomerization between 2-isopropylmalate and 3-isopropylmalate, via the formation of 2-isopropylmaleate. The chain is 3-isopropylmalate dehydratase small subunit from Shouchella clausii (strain KSM-K16) (Alkalihalobacillus clausii).